Consider the following 154-residue polypeptide: Myoglobin (154 aa).

The Globin domain occupies 2–148; that stretch reads GLSDGEWQLV…FRNDMAAQYK (147 aa). A Phosphoserine modification is found at Ser-4. Residue His-65 coordinates nitrite. His-65 provides a ligand contact to O2. The residue at position 68 (Thr-68) is a Phosphothreonine. Heme b is bound at residue His-94.

As to quaternary structure, monomer.

It localises to the cytoplasm. The protein localises to the sarcoplasm. The catalysed reaction is Fe(III)-heme b-[protein] + nitric oxide + H2O = Fe(II)-heme b-[protein] + nitrite + 2 H(+). It catalyses the reaction H2O2 + AH2 = A + 2 H2O. Monomeric heme protein which primary function is to store oxygen and facilitate its diffusion within muscle tissues. Reversibly binds oxygen through a pentacoordinated heme iron and enables its timely and efficient release as needed during periods of heightened demand. Depending on the oxidative conditions of tissues and cells, and in addition to its ability to bind oxygen, it also has a nitrite reductase activity whereby it regulates the production of bioactive nitric oxide. Under stress conditions, like hypoxia and anoxia, it also protects cells against reactive oxygen species thanks to its pseudoperoxidase activity. This chain is Myoglobin, found in Rangifer tarandus (Reindeer).